Consider the following 697-residue polypeptide: Probable translocation protein y4yR (697 aa).

Helical transmembrane passes span 20-40 (VALM…VMAV), 42-62 (ALIG…LYVS), 67-87 (FSSL…LTVA), 107-127 (SFVI…VTMV), 200-220 (SIAG…IGLL), 235-255 (LLTI…SITA), 293-313 (VAMG…AAVF), and 372-392 (IARI…PIPV). Residues 675–697 (IRLPPSNGTSGEPRSIRPSATTG) form a disordered region. Positions 680–697 (SNGTSGEPRSIRPSATTG) are enriched in polar residues.

Belongs to the FHIPEP (flagella/HR/invasion proteins export pore) family.

The protein localises to the cell inner membrane. In terms of biological role, could be involved in the secretion of an unknown factor. The protein is Probable translocation protein y4yR of Sinorhizobium fredii (strain NBRC 101917 / NGR234).